The sequence spans 504 residues: Cytochrome P450 71B7 (504 aa).

A helical membrane pass occupies residues methionine 1–leucine 21. Lysine 82 is covalently cross-linked (Glycyl lysine isopeptide (Lys-Gly) (interchain with G-Cter in ubiquitin)). Cysteine 446 contacts heme.

The protein belongs to the cytochrome P450 family. Heme serves as cofactor. In terms of tissue distribution, highly expressed in rosette leaves. Also expressed in roots, leaves, flowers, and siliques.

It is found in the membrane. This Arabidopsis thaliana (Mouse-ear cress) protein is Cytochrome P450 71B7 (CYP71B7).